Here is an 874-residue protein sequence, read N- to C-terminus: Alanine--tRNA ligase (874 aa).

4 residues coordinate Zn(2+): histidine 562, histidine 566, cysteine 664, and histidine 668.

The protein belongs to the class-II aminoacyl-tRNA synthetase family. Zn(2+) serves as cofactor.

Its subcellular location is the cytoplasm. The catalysed reaction is tRNA(Ala) + L-alanine + ATP = L-alanyl-tRNA(Ala) + AMP + diphosphate. In terms of biological role, catalyzes the attachment of alanine to tRNA(Ala) in a two-step reaction: alanine is first activated by ATP to form Ala-AMP and then transferred to the acceptor end of tRNA(Ala). Also edits incorrectly charged Ser-tRNA(Ala) and Gly-tRNA(Ala) via its editing domain. The sequence is that of Alanine--tRNA ligase from Neisseria meningitidis serogroup A / serotype 4A (strain DSM 15465 / Z2491).